A 686-amino-acid polypeptide reads, in one-letter code: Calponin homology and LIM domain-containing protein (686 aa).

The region spanning 15-120 is the Calponin-homology (CH) domain; sequence ELALDESRDW…ITLYWLGRAA (106 aa). 2 consecutive LIM zinc-binding domains span residues 139–200 and 219–279; these read MNCS…ATNL and NKCS…SCGK. The segment covering 305-314 has biased composition (basic and acidic residues); sequence KQVMDKDGHD. Residues 305 to 345 form a disordered region; sequence KQVMDKDGHDHHHHNHNKPTTTTTTTNSNSPLAKKKSDSCK. The segment covering 322–333 has biased composition (low complexity); it reads KPTTTTTTTNSN. 4 LIM zinc-binding domains span residues 373–435, 437–495, 519–579, and 583–658; these read GTCG…NNKS, KNCH…LNQY, DRCV…IQQS, and DHCA…ASSS.

In terms of assembly, interacts with limF and rab21.

In terms of biological role, involved in the regulation of phagocytosis. May repress rab21. The sequence is that of Calponin homology and LIM domain-containing protein (ChLim) from Dictyostelium discoideum (Social amoeba).